The sequence spans 151 residues: Large-conductance mechanosensitive channel (151 aa).

2 helical membrane-spanning segments follow: residues 19 to 39 (VGII…GDVL) and 85 to 105 (GLFI…FFLV).

This sequence belongs to the MscL family. As to quaternary structure, homopentamer.

It localises to the cell inner membrane. In terms of biological role, channel that opens in response to stretch forces in the membrane lipid bilayer. May participate in the regulation of osmotic pressure changes within the cell. In Chlorobaculum parvum (strain DSM 263 / NCIMB 8327) (Chlorobium vibrioforme subsp. thiosulfatophilum), this protein is Large-conductance mechanosensitive channel.